Reading from the N-terminus, the 199-residue chain is Probable molybdenum cofactor guanylyltransferase (199 aa).

GTP-binding positions include 9-11 (LAG), K21, D69, and D100. D100 contacts Mg(2+).

This sequence belongs to the MobA family. The cofactor is Mg(2+).

It localises to the cytoplasm. The enzyme catalyses Mo-molybdopterin + GTP + H(+) = Mo-molybdopterin guanine dinucleotide + diphosphate. In terms of biological role, transfers a GMP moiety from GTP to Mo-molybdopterin (Mo-MPT) cofactor (Moco or molybdenum cofactor) to form Mo-molybdopterin guanine dinucleotide (Mo-MGD) cofactor. This Bacillus cytotoxicus (strain DSM 22905 / CIP 110041 / 391-98 / NVH 391-98) protein is Probable molybdenum cofactor guanylyltransferase.